The following is a 698-amino-acid chain: DNA ligase (698 aa).

NAD(+)-binding positions include 40–44, 89–90, and E123; these read DGEYD and SL. K125 acts as the N6-AMP-lysine intermediate in catalysis. 4 residues coordinate NAD(+): R146, E184, K300, and K324. Residues C418, C421, C436, and C442 each coordinate Zn(2+). The region spanning 620–698 is the BRCT domain; the sequence is AGDSPLAGKT…EAEFRAMSGG (79 aa).

The protein belongs to the NAD-dependent DNA ligase family. LigA subfamily. The cofactor is Mg(2+). Requires Mn(2+) as cofactor.

It catalyses the reaction NAD(+) + (deoxyribonucleotide)n-3'-hydroxyl + 5'-phospho-(deoxyribonucleotide)m = (deoxyribonucleotide)n+m + AMP + beta-nicotinamide D-nucleotide.. Functionally, DNA ligase that catalyzes the formation of phosphodiester linkages between 5'-phosphoryl and 3'-hydroxyl groups in double-stranded DNA using NAD as a coenzyme and as the energy source for the reaction. It is essential for DNA replication and repair of damaged DNA. The chain is DNA ligase from Rhodospirillum rubrum (strain ATCC 11170 / ATH 1.1.1 / DSM 467 / LMG 4362 / NCIMB 8255 / S1).